Consider the following 394-residue polypeptide: Elongation factor Tu 2 (394 aa).

In terms of domain architecture, tr-type G spans 10-204 (KPHVNVGTIG…FLDSYIPEPE (195 aa)). The G1 stretch occupies residues 19 to 26 (GHVDHGKT). 19 to 26 (GHVDHGKT) contacts GTP. Position 26 (T26) interacts with Mg(2+). Residues 60 to 64 (GITIN) form a G2 region. A G3 region spans residues 81-84 (DCPG). Residues 81-85 (DCPGH) and 136-139 (NKCD) each bind GTP. The G4 stretch occupies residues 136–139 (NKCD). Residues 174-176 (SAL) form a G5 region.

Belongs to the TRAFAC class translation factor GTPase superfamily. Classic translation factor GTPase family. EF-Tu/EF-1A subfamily. As to quaternary structure, monomer.

The protein localises to the cytoplasm. It carries out the reaction GTP + H2O = GDP + phosphate + H(+). GTP hydrolase that promotes the GTP-dependent binding of aminoacyl-tRNA to the A-site of ribosomes during protein biosynthesis. In Shigella flexneri serotype 5b (strain 8401), this protein is Elongation factor Tu 2.